The following is a 591-amino-acid chain: Aspartate--tRNA(Asp/Asn) ligase (591 aa).

Glu174 contributes to the L-aspartate binding site. The tract at residues 198–201 (QLFK) is aspartate. Arg220 contributes to the L-aspartate binding site. ATP contacts are provided by residues 220 to 222 (RDE) and Gln229. Residue His450 coordinates L-aspartate. Position 483 (Glu483) interacts with ATP. Arg490 contributes to the L-aspartate binding site. 535 to 538 (GLDR) contributes to the ATP binding site.

Belongs to the class-II aminoacyl-tRNA synthetase family. Type 1 subfamily. As to quaternary structure, homodimer.

It localises to the cytoplasm. It carries out the reaction tRNA(Asx) + L-aspartate + ATP = L-aspartyl-tRNA(Asx) + AMP + diphosphate. Aspartyl-tRNA synthetase with relaxed tRNA specificity since it is able to aspartylate not only its cognate tRNA(Asp) but also tRNA(Asn). Reaction proceeds in two steps: L-aspartate is first activated by ATP to form Asp-AMP and then transferred to the acceptor end of tRNA(Asp/Asn). The polypeptide is Aspartate--tRNA(Asp/Asn) ligase (Pseudomonas putida (strain W619)).